The chain runs to 589 residues: MAQFLLTVLQVLLALTFWIGIGSGSSNHYNAGDHVPLFVNKVGPLHNPSETYQYYDLPFCRRGPVIEKQETLGEVLNGDRLMSSLYKLKFREDKTHFVLCRKRLTSSDIARFRDIIAQDYYFQMYYDDLPLWGFVGKVEGDYFGQGEKHTKYYIFSHLKFNVLYNADKVIEINSFSDPSYMVDISENTEIDVQFTYSVSWNLTSERSETRMNKYSRASFHPISQKIHFFSFLNSITVVVLLIGLISFLFMRHLKNELRSYSIGDEEERKEAGWKLVHSDVFRCPRNISWLCAILGTGTQLLILIIALFALAFTGFLYPYNRGMLLTSLVIMYTLTSIVAGYTSTSFHSQFEGNKQKRSVRLAGILYPVPFFIILSVLNTVAITYGATAALPFGTIVIIILIFTLLNIPFLMLGGVLGNRFGLLEFQPPSAVKRNPREIPPQNWYRRKLYQVFLGGFVPFSAVVLEWHQLYASLWGFKIYTSPGIMLFTFIVLIFLSSSVGIILTYIQLSGEDHEWWWRSILCGGFTAVFMYGYGVLFYLRSDMTGFLQLSFYLGYTALLCYALFLVLGTISFLASLMFIRHIYRSVKLE.

An N-terminal signal peptide occupies residues 1–24 (MAQFLLTVLQVLLALTFWIGIGSG). Over 25–227 (SSNHYNAGDH…SFHPISQKIH (203 aa)) the chain is Lumenal. The helical transmembrane segment at 228 to 248 (FFSFLNSITVVVLLIGLISFL) threads the bilayer. Residues 249–291 (FMRHLKNELRSYSIGDEEERKEAGWKLVHSDVFRCPRNISWLC) are Cytoplasmic-facing. The chain crosses the membrane as a helical span at residues 292–312 (AILGTGTQLLILIIALFALAF). Residues 313 to 321 (TGFLYPYNR) lie on the Lumenal side of the membrane. A helical transmembrane segment spans residues 322 to 342 (GMLLTSLVIMYTLTSIVAGYT). The Cytoplasmic segment spans residues 343-361 (STSFHSQFEGNKQKRSVRL). Residues 362–382 (AGILYPVPFFIILSVLNTVAI) traverse the membrane as a helical segment. The Lumenal segment spans residues 383-394 (TYGATAALPFGT). The chain crosses the membrane as a helical span at residues 395 to 415 (IVIIILIFTLLNIPFLMLGGV). At 416 to 450 (LGNRFGLLEFQPPSAVKRNPREIPPQNWYRRKLYQ) the chain is on the cytoplasmic side. Residues 451 to 471 (VFLGGFVPFSAVVLEWHQLYA) traverse the membrane as a helical segment. Topologically, residues 472 to 482 (SLWGFKIYTSP) are lumenal. Residues 483–503 (GIMLFTFIVLIFLSSSVGIIL) form a helical membrane-spanning segment. At 504–518 (TYIQLSGEDHEWWWR) the chain is on the cytoplasmic side. The chain crosses the membrane as a helical span at residues 519 to 539 (SILCGGFTAVFMYGYGVLFYL). The Lumenal segment spans residues 540 to 550 (RSDMTGFLQLS). A helical transmembrane segment spans residues 551-571 (FYLGYTALLCYALFLVLGTIS). Residues 572-589 (FLASLMFIRHIYRSVKLE) lie on the Cytoplasmic side of the membrane. Positions 578-583 (FIRHIY) match the Endoplasmic reticulum export signal motif. The Golgi retention signal motif lies at 587–589 (KLE).

It belongs to the nonaspanin (TM9SF) (TC 9.A.2) family. As to expression, expressed in the root cap and in giant cells.

Its subcellular location is the endosome membrane. It is found in the golgi apparatus membrane. The polypeptide is Transmembrane 9 superfamily member 5 (Arabidopsis thaliana (Mouse-ear cress)).